The primary structure comprises 239 residues: Probable transcriptional regulatory protein ABO_1803 (239 aa).

The protein belongs to the TACO1 family.

It localises to the cytoplasm. This Alcanivorax borkumensis (strain ATCC 700651 / DSM 11573 / NCIMB 13689 / SK2) protein is Probable transcriptional regulatory protein ABO_1803.